The following is a 117-amino-acid chain: Ribonuclease P protein component (117 aa).

Belongs to the RnpA family. Consists of a catalytic RNA component (M1 or rnpB) and a protein subunit.

The enzyme catalyses Endonucleolytic cleavage of RNA, removing 5'-extranucleotides from tRNA precursor.. In terms of biological role, RNaseP catalyzes the removal of the 5'-leader sequence from pre-tRNA to produce the mature 5'-terminus. It can also cleave other RNA substrates such as 4.5S RNA. The protein component plays an auxiliary but essential role in vivo by binding to the 5'-leader sequence and broadening the substrate specificity of the ribozyme. The sequence is that of Ribonuclease P protein component from Thermotoga maritima (strain ATCC 43589 / DSM 3109 / JCM 10099 / NBRC 100826 / MSB8).